The chain runs to 304 residues: tRNA pseudouridine synthase B (304 aa).

Aspartate 38 functions as the Nucleophile in the catalytic mechanism. The region spanning 227–302 (LPKVEIYKDF…RIFKLKKVFK (76 aa)) is the PUA domain.

The protein belongs to the pseudouridine synthase TruB family. Type 1 subfamily.

It catalyses the reaction uridine(55) in tRNA = pseudouridine(55) in tRNA. In terms of biological role, responsible for synthesis of pseudouridine from uracil-55 in the psi GC loop of transfer RNAs. The sequence is that of tRNA pseudouridine synthase B from Thermosipho melanesiensis (strain DSM 12029 / CIP 104789 / BI429).